A 378-amino-acid polypeptide reads, in one-letter code: Chaperone protein DnaJ (378 aa).

Residues 5–72 (DFYEVLGVPK…QKRAAYDQFG (68 aa)) enclose the J domain. The CR-type zinc finger occupies 138 to 216 (GKEAQIRIPS…CHGQGKVKKQ (79 aa)). Residues Cys151, Cys154, Cys168, Cys171, Cys190, Cys193, Cys204, and Cys207 each contribute to the Zn(2+) site. CXXCXGXG motif repeat units follow at residues 151 to 158 (CETCHGSG), 168 to 175 (CTTCSGTG), 190 to 197 (CPHCRGTG), and 204 to 211 (CVTCHGQG). Residues 354–378 (SLKKGGGKHSPSGESWTDRLKNLFT) are disordered. Residues 369–378 (WTDRLKNLFT) show a composition bias toward basic and acidic residues.

It belongs to the DnaJ family. Homodimer. Zn(2+) is required as a cofactor.

It localises to the cytoplasm. Its function is as follows. Participates actively in the response to hyperosmotic and heat shock by preventing the aggregation of stress-denatured proteins and by disaggregating proteins, also in an autonomous, DnaK-independent fashion. Unfolded proteins bind initially to DnaJ; upon interaction with the DnaJ-bound protein, DnaK hydrolyzes its bound ATP, resulting in the formation of a stable complex. GrpE releases ADP from DnaK; ATP binding to DnaK triggers the release of the substrate protein, thus completing the reaction cycle. Several rounds of ATP-dependent interactions between DnaJ, DnaK and GrpE are required for fully efficient folding. Also involved, together with DnaK and GrpE, in the DNA replication of plasmids through activation of initiation proteins. The sequence is that of Chaperone protein DnaJ from Paracidovorax citrulli (strain AAC00-1) (Acidovorax citrulli).